The primary structure comprises 290 residues: Enoyl-CoA hydratase, mitochondrial (290 aa).

Residues 1 to 27 (MAALRVLLSCVRGPLRPPVRCPAWRPF) constitute a mitochondrion transit peptide. Thr-46 carries the post-translational modification Phosphothreonine. Substrate is bound at residue 98 to 101 (ADIK). Lys-101 bears the N6-acetyllysine; alternate mark. Lys-101 carries the post-translational modification N6-succinyllysine; alternate. A Phosphoserine modification is found at Ser-114. N6-acetyllysine; alternate is present on Lys-115. Residue Lys-115 is modified to N6-succinyllysine; alternate. Lys-118 bears the N6-acetyllysine mark. Gly-141 contacts substrate. An N6-succinyllysine modification is found at Lys-204. Lys-211 carries the post-translational modification N6-acetyllysine.

The protein belongs to the enoyl-CoA hydratase/isomerase family. In terms of assembly, homohexamer; dimer of trimers. Liver, fibroblast, muscle. Barely detectable in spleen and kidney.

It localises to the mitochondrion matrix. It catalyses the reaction a (3S)-3-hydroxyacyl-CoA = a (2E)-enoyl-CoA + H2O. The enzyme catalyses a (3E)-enoyl-CoA = a 4-saturated (2E)-enoyl-CoA. It carries out the reaction (3E)-hexenoyl-CoA = (2E)-hexenoyl-CoA. The catalysed reaction is (3S)-3-hydroxybutanoyl-CoA = (2E)-butenoyl-CoA + H2O. It catalyses the reaction 3-hydroxyisovaleryl-CoA = 3-methylbut-2-enoyl-CoA + H2O. The enzyme catalyses 3-hydroxypropanoyl-CoA = acryloyl-CoA + H2O. It carries out the reaction 3-hydroxybutanoyl-CoA = (2E)-butenoyl-CoA + H2O. The catalysed reaction is 2-methylpropenoyl-CoA + H2O = (S)-3-hydroxyisobutanoyl-CoA. It catalyses the reaction (3S)-hydroxyhexanoyl-CoA = (2E)-hexenoyl-CoA + H2O. The enzyme catalyses (3S)-hydroxydecanoyl-CoA = (2E)-decenoyl-CoA + H2O. The protein operates within lipid metabolism; fatty acid beta-oxidation. In terms of biological role, converts unsaturated trans-2-enoyl-CoA species ((2E)-enoyl-CoA) to the corresponding (3S)-3hydroxyacyl-CoA species through addition of a water molecule to the double bond. Catalyzes the hydration of medium- and short-chained fatty enoyl-CoA thioesters from 4 carbons long (C4) up to C16. Has high substrate specificity for crotonyl-CoA ((2E)-butenoyl-CoA) and moderate specificity for acryloyl-CoA, 3-methylcrotonyl-CoA (3-methyl-(2E)-butenoyl-CoA) and methacrylyl-CoA ((2E)-2-methylpropenoyl-CoA). Can bind tiglyl-CoA (2-methylcrotonoyl-CoA), but hydrates only a small amount of this substrate. Plays a key role in the beta-oxidation spiral of short- and medium-chain fatty acid oxidation. At a lower rate than the hydratase reaction, catalyzes the isomerase reaction of trans-3-enoyl-CoA species (such as (3E)-hexenoyl-CoA) to trans-2-enoyl-CoA species (such as (2E)-hexenoyl-CoA), which are subsequently hydrated to 3(S)-3-hydroxyacyl-CoA species (such as (3S)-hydroxyhexanoyl-CoA). The chain is Enoyl-CoA hydratase, mitochondrial from Homo sapiens (Human).